Consider the following 439-residue polypeptide: MSTIFALCTPWGKSGVAVIRVSGQDAVKTFMHFKISNAIKPRVATFTPLYNAAHEVIDEVIVVYFSAPNSFTGEDVVELHTHGSIAVIRMILCELGKIFIPAGPGEFSLRAFLNNKVDLTRAEAIVDLINAETEMQAKQAIRQMSGSLEKLYQSWRQQLIDVLSNMEAYIDFPEEVTSFAVENISFLLDKIKESLENHLNDGRKGEILRQGIYVAILGEPNSGKSTLFNHLAKRDIAIVSEYAGTTRDVLETHIDIAGYPIVIIDTAGIRDSNDPVEQEGIRRAKLKAESADFKIIMLPYEKKDALNNEIIDLIDDRSICVLSKSDSIITQNLININDINFIPVSVCCNLGIEHLLSAIQKKVEADFKFCSTSPFITSDRQRVHIQNAVNILKNISFELPMELISEDLRLSVRELEKVVGVISNEEILDNVFGKFCIGK.

Positions 20, 78, and 116 each coordinate (6S)-5-formyl-5,6,7,8-tetrahydrofolate. The TrmE-type G domain occupies 211 to 364 (GIYVAILGEP…LLSAIQKKVE (154 aa)). GTP contacts are provided by residues 221-226 (NSGKST), 240-246 (SEYAGTT), and 265-268 (DTAG). 2 residues coordinate Mg(2+): Ser225 and Thr246. Lys439 lines the (6S)-5-formyl-5,6,7,8-tetrahydrofolate pocket.

Belongs to the TRAFAC class TrmE-Era-EngA-EngB-Septin-like GTPase superfamily. TrmE GTPase family. In terms of assembly, homodimer. Heterotetramer of two MnmE and two MnmG subunits. It depends on K(+) as a cofactor.

Its subcellular location is the cytoplasm. Functionally, exhibits a very high intrinsic GTPase hydrolysis rate. Involved in the addition of a carboxymethylaminomethyl (cmnm) group at the wobble position (U34) of certain tRNAs, forming tRNA-cmnm(5)s(2)U34. This is tRNA modification GTPase MnmE from Ehrlichia ruminantium (strain Gardel).